Here is a 500-residue protein sequence, read N- to C-terminus: Cytochrome P450 726A27 (500 aa).

A helical; Signal-anchor for type II membrane protein membrane pass occupies residues 7 to 27; that stretch reads IPSYPIIFSFFIFIFMLIKIW. Cys440 is a heme binding site.

The protein belongs to the cytochrome P450 family. It depends on heme as a cofactor. As to expression, expressed in mature seeds.

The protein localises to the membrane. The enzyme catalyses (-)-casbene + reduced [NADPH--hemoprotein reductase] + O2 = 4-hydroxycasbene + oxidized [NADPH--hemoprotein reductase] + H2O + H(+). It catalyses the reaction 8-hydroxycasbene + reduced [NADPH--hemoprotein reductase] + O2 = 4,8-dihydroxycasbene + oxidized [NADPH--hemoprotein reductase] + H2O + H(+). It carries out the reaction 4,8-dihydroxycasbene + reduced [NADPH--hemoprotein reductase] + O2 = 4,5,8-trihydroxycasbene + oxidized [NADPH--hemoprotein reductase] + H2O + H(+). The protein operates within secondary metabolite biosynthesis; terpenoid biosynthesis. In terms of biological role, involved in the biosynthesis of macrocyclic lathyrane type diterpenoids (also called Euphorbia factors) natural products, including the cyclization route from casbene to jolkinol C, a precursor for ingenol mebutate that is used to treat actinic keratosis, a precancerous skin condition. Catalyzes the hydroxylation of (-)-casbene and 8-hydroxycasbene to produce 4-hydroxycasbene and 4,8-dihydroxycasbene, respectively. This Euphorbia lathyris (Caper spurge) protein is Cytochrome P450 726A27.